Here is a 417-residue protein sequence, read N- to C-terminus: Probable glucuronosyltransferase Os01g0926700 (417 aa).

At 1 to 3 (MRR) the chain is on the cytoplasmic side. A helical; Signal-anchor for type II membrane protein transmembrane segment spans residues 4–24 (WVLAIAILAAAVCFFLGAQAQ). Over 25 to 417 (EVRQGHQTER…AGPVGDLKPW (393 aa)) the chain is Lumenal. 2 N-linked (GlcNAc...) asparagine glycosylation sites follow: Asn-144 and Asn-405.

It belongs to the glycosyltransferase 47 family.

The protein resides in the golgi apparatus membrane. Its function is as follows. Involved in the synthesis of glucuronoxylan hemicellulose in secondary cell walls. In Oryza sativa subsp. japonica (Rice), this protein is Probable glucuronosyltransferase Os01g0926700.